A 232-amino-acid chain; its full sequence is tRNA (guanine-N(7)-)-methyltransferase (232 aa).

4 residues coordinate S-adenosyl-L-methionine: Glu-63, Glu-88, Asp-115, and Asp-137. Residue Asp-137 is part of the active site. Residues Lys-141, Asp-173, and 211-214 (TRYE) each bind substrate.

The protein belongs to the class I-like SAM-binding methyltransferase superfamily. TrmB family.

It carries out the reaction guanosine(46) in tRNA + S-adenosyl-L-methionine = N(7)-methylguanosine(46) in tRNA + S-adenosyl-L-homocysteine. It functions in the pathway tRNA modification; N(7)-methylguanine-tRNA biosynthesis. In terms of biological role, catalyzes the formation of N(7)-methylguanine at position 46 (m7G46) in tRNA. This Agrobacterium fabrum (strain C58 / ATCC 33970) (Agrobacterium tumefaciens (strain C58)) protein is tRNA (guanine-N(7)-)-methyltransferase.